The primary structure comprises 816 residues: Stemod-13(17)-ene synthase (816 aa).

Polar residues predominate over residues 1–10 (MMLLSSSYSG). Positions 1–24 (MMLLSSSYSGGQFPGVSPLGTRPK) are disordered. 5 residues coordinate Mg(2+): Asp-553, Asp-557, Asn-698, Thr-702, and Glu-706. Residues 553-557 (DDFFD) carry the DDXXD motif motif.

The protein belongs to the terpene synthase family. Requires Mg(2+) as cofactor.

The enzyme catalyses 9alpha-copalyl diphosphate = stemod-13(17)-ene + diphosphate. Catalyzes the conversion of syn-copalyl diphosphate to stemodene. The sequence is that of Stemod-13(17)-ene synthase (KSL11) from Oryza sativa subsp. indica (Rice).